Here is a 599-residue protein sequence, read N- to C-terminus: Glucose-6-phosphate 1-dehydrogenase 3, chloroplastic (599 aa).

The segment covering 1 to 18 (MSSLSCPTYRSRTSSSSP) has biased composition (low complexity). Residues 1-23 (MSSLSCPTYRSRTSSSSPFLSNH) form a disordered region. Residues 1–66 (MSSLSCPTYR…RSQRRSVQSS (66 aa)) constitute a chloroplast transit peptide. Val67 carries the N-acetylvaline modification. Residues 119-126 (GASGDLAK) and Arg153 each bind NADP(+). A disulfide bridge links Cys171 with Cys179. Lys256 serves as a coordination point for NADP(+). D-glucose 6-phosphate is bound by residues Lys256, 286–290 (HYLGK), Glu324, and Asp343. Catalysis depends on His348, which acts as the Proton acceptor. Lys441 contributes to the NADP(+) binding site. Lys444 and Arg449 together coordinate D-glucose 6-phosphate. The NADP(+) site is built by Arg454 and Arg483. D-glucose 6-phosphate is bound at residue Gln485. Residues 491 to 493 (YLK) and Arg576 contribute to the NADP(+) site.

It belongs to the glucose-6-phosphate dehydrogenase family. In terms of assembly, forms homodimer. Interacts with G6PD1. As to expression, expressed in roots, flowers and siliques.

The protein resides in the plastid. The protein localises to the chloroplast stroma. The enzyme catalyses D-glucose 6-phosphate + NADP(+) = 6-phospho-D-glucono-1,5-lactone + NADPH + H(+). Its pathway is carbohydrate degradation; pentose phosphate pathway; D-ribulose 5-phosphate from D-glucose 6-phosphate (oxidative stage): step 1/3. Regulated by metabolites. Post-translationally inactivated by cysteine-mediated redox modification via the ferredoxin-thioredoxin system in the light and this avoids futile cycles with photosynthetic CO2 fixation. Its function is as follows. Catalyzes the rate-limiting step of the oxidative pentose-phosphate pathway, which represents a route for the dissimilation of carbohydrates besides glycolysis. The main function of this enzyme is to provide reducing power (NADPH) and pentose phosphates for fatty acid and nucleic acid synthesis which are involved in membrane synthesis and cell division. This Arabidopsis thaliana (Mouse-ear cress) protein is Glucose-6-phosphate 1-dehydrogenase 3, chloroplastic.